Consider the following 368-residue polypeptide: Mediator of RNA polymerase II transcription subunit 2 (368 aa).

The segment covering 112 to 163 has biased composition (basic and acidic residues); sequence KKKEQEEEEEKKKKQKEEEEKRKKELEEQERKKKEQEEEEKRRRQQEQDGDK. 2 disordered regions span residues 112–231 and 265–308; these read KKKE…DSQS and SNAN…NNET. Positions 177–192 are enriched in polar residues; sequence DLDTSQPGTSGQNDIK. Over residues 265 to 290 the composition is skewed to low complexity; it reads SNANATTNSVPNNNNPATNDSNMNND.

Belongs to the Mediator complex subunit 2 family. In terms of assembly, component of the Mediator complex.

It localises to the nucleus. In terms of biological role, component of the Mediator complex, a coactivator involved in the regulated transcription of nearly all RNA polymerase II-dependent genes. Mediator functions as a bridge to convey information from gene-specific regulatory proteins to the basal RNA polymerase II transcription machinery. Mediator is recruited to promoters by direct interactions with regulatory proteins and serves as a scaffold for the assembly of a functional preinitiation complex with RNA polymerase II and the general transcription factors. This chain is Mediator of RNA polymerase II transcription subunit 2 (MED2), found in Candida glabrata (strain ATCC 2001 / BCRC 20586 / JCM 3761 / NBRC 0622 / NRRL Y-65 / CBS 138) (Yeast).